Here is a 273-residue protein sequence, read N- to C-terminus: Undecaprenyl-diphosphatase (273 aa).

7 helical membrane-spanning segments follow: residues 45–65 (AKTF…VMFW), 90–110 (LTLI…LIFH), 116–136 (LFNP…LIAA), 154–173 (YRQA…PGFS), 190–210 (YAAS…ATAL), 222–242 (ADFP…LVAI), and 252–272 (ISFI…YVVF).

The protein belongs to the UppP family.

Its subcellular location is the cell inner membrane. It carries out the reaction di-trans,octa-cis-undecaprenyl diphosphate + H2O = di-trans,octa-cis-undecaprenyl phosphate + phosphate + H(+). Functionally, catalyzes the dephosphorylation of undecaprenyl diphosphate (UPP). Confers resistance to bacitracin. In Enterobacter sp. (strain 638), this protein is Undecaprenyl-diphosphatase.